The sequence spans 78 residues: UPF0349 protein Sca_0544 (78 aa).

It belongs to the UPF0349 family.

The protein is UPF0349 protein Sca_0544 of Staphylococcus carnosus (strain TM300).